A 224-amino-acid chain; its full sequence is UPF0758 protein PSPPH_0210 (224 aa).

One can recognise an MPN domain in the interval 102–224; sequence ALENPTQVRN…PLSMVERGLM (123 aa). Zn(2+) is bound by residues H173, H175, and D186. The JAMM motif signature appears at 173–186; sequence HNHPSGITTPSRSD.

This sequence belongs to the UPF0758 family.

The chain is UPF0758 protein PSPPH_0210 from Pseudomonas savastanoi pv. phaseolicola (strain 1448A / Race 6) (Pseudomonas syringae pv. phaseolicola (strain 1448A / Race 6)).